The following is an 834-amino-acid chain: DIS3-like exonuclease 2 (834 aa).

The segment covering 1–23 has biased composition (polar residues); sequence MHNSEFLSPVQSGTQRGTNRSIL. The tract at residues 1-35 is disordered; sequence MHNSEFLSPVQSGTQRGTNRSILNNKKSGKGKKKS. Residues Asp354 and Asp363 each coordinate Mg(2+).

The protein belongs to the RNR ribonuclease family. DIS3L2 subfamily. Requires Mg(2+) as cofactor. Mn(2+) serves as cofactor.

Its subcellular location is the cytoplasm. The protein localises to the P-body. Functionally, 3'-5'-exoribonuclease that specifically recognizes RNAs polyuridylated at their 3' end and mediates their degradation. Component of an exosome-independent RNA degradation pathway that mediates degradation of both mRNAs and miRNAs that have been polyuridylated by a terminal uridylyltransferase. Essential for correct mitosis, and negatively regulates cell proliferation. The protein is DIS3-like exonuclease 2 of Xenopus tropicalis (Western clawed frog).